We begin with the raw amino-acid sequence, 488 residues long: Beta-xylosidase (488 aa).

Glu163 functions as the Proton donor in the catalytic mechanism. Glu275 acts as the Nucleophile in catalysis.

It belongs to the glycosyl hydrolase 39 family.

It catalyses the reaction Hydrolysis of (1-&gt;4)-beta-D-xylans, to remove successive D-xylose residues from the non-reducing termini.. Its function is as follows. Beta-xylosidase is an intracellular xylan-degrading enzyme. The protein is Beta-xylosidase (xynB) of Caldicellulosiruptor saccharolyticus (Caldocellum saccharolyticum).